Here is a 509-residue protein sequence, read N- to C-terminus: Probable xyloglucan galactosyltransferase GT12 (509 aa).

Topologically, residues 1–3 are cytoplasmic; it reads MMK. The chain crosses the membrane as a helical; Signal-anchor for type II membrane protein span at residues 4–24; it reads PVPKLWVVISSAFVFCLLVLF. Over 25–509 the chain is Lumenal; it reads QINKSDLIEA…KLEIIHEKTA (485 aa). N-linked (GlcNAc...) asparagine glycans are attached at residues asparagine 27, asparagine 59, asparagine 65, asparagine 169, asparagine 170, asparagine 195, asparagine 257, and asparagine 416.

It belongs to the glycosyltransferase 47 family. As to expression, expressed in pollen grains.

Its subcellular location is the golgi apparatus membrane. Functions in xyloglucan synthesis by adding side chains to the xylosylated glucan backbone. Involved in the galactosylation of hemicellulose xyloglucan. The sequence is that of Probable xyloglucan galactosyltransferase GT12 from Arabidopsis thaliana (Mouse-ear cress).